Here is a 265-residue protein sequence, read N- to C-terminus: Energy-coupling factor transporter transmembrane protein EcfT (265 aa).

5 consecutive transmembrane segments (helical) span residues 29 to 49 (IILF…AILI), 73 to 93 (VWIL…GGTV), 110 to 130 (AIFI…LTLT), 143 to 163 (LLGP…MMSI), and 242 to 262 (FTWR…VIGW).

The protein belongs to the energy-coupling factor EcfT family. Forms a stable energy-coupling factor (ECF) transporter complex composed of 2 membrane-embedded substrate-binding proteins (S component), 2 ATP-binding proteins (A component) and 2 transmembrane proteins (T component). May be able to interact with more than 1 S component at a time.

It is found in the cell membrane. Its function is as follows. Transmembrane (T) component of an energy-coupling factor (ECF) ABC-transporter complex. Unlike classic ABC transporters this ECF transporter provides the energy necessary to transport a number of different substrates. This chain is Energy-coupling factor transporter transmembrane protein EcfT, found in Brevibacillus brevis (strain 47 / JCM 6285 / NBRC 100599).